The sequence spans 123 residues: uncharacterized protein (123 aa).

The helical transmembrane segment at 1-21 (MHIIAKSILLMAVSFLVIIFT) threads the bilayer.

The protein resides in the membrane. This is an uncharacterized protein from Methanocaldococcus jannaschii (strain ATCC 43067 / DSM 2661 / JAL-1 / JCM 10045 / NBRC 100440) (Methanococcus jannaschii).